Consider the following 512-residue polypeptide: MEELKGYLEKSRSKQQHFLYPLLFQEYIYVLAHDHGLNVNGSIFYEPAEISGYDKNFSSLLVKRLITRIYQQNYLINSVNDSNQNGFVGHNKNFYSQMISEGFAVIVEIPFSLRLVSSLEGKKEIPKSQNLRSIHSIFPFFEDKLSHLNCVSDILIPYPVHLEILVQILQCWIQDVPSLHLLRFFFHEYQNWNNLITPKKSNYYGFSKENPRLFLFLYNSYVVECESILVFLRKQSSYLRSTSSGTFLERAHFYEKIEQHLVVLCCNDFQKTLWLCKDPFMHYVRYQGKSILSSKGTHLLMKKWKSYFVNFWQCHFHFWSQPCRIHINQFSNFSFYFLGYLSSVPINPSAVKSQMLENFFLVDTVTKKFETIVPIIPMIGALSKAKFCNVSGNPISKPVWADLSDSDIIDRFGRTCRNLSHYYSGSSKKQSLYRIKYILRLSCARTLARKHKSTVRAFLQRLGSEFLEEFFTEEEKALSLILPRISYPLHKLYRERIWYLDIIRINDLVNHL.

Belongs to the intron maturase 2 family. MatK subfamily.

The protein localises to the plastid. The protein resides in the chloroplast. Functionally, usually encoded in the trnK tRNA gene intron. Probably assists in splicing its own and other chloroplast group II introns. This is Maturase K from Amorphophallus abyssinicus (Black arum).